A 340-amino-acid polypeptide reads, in one-letter code: ATPase GET3 (340 aa).

Position 35–42 (35–42 (KGGVGKTT)) interacts with ATP. D64 is an active-site residue. ATP contacts are provided by E245 and N272. The Zn(2+) site is built by C283 and C286.

This sequence belongs to the arsA ATPase family. Homodimer.

The protein localises to the cytoplasm. It is found in the endoplasmic reticulum. Its function is as follows. ATPase required for the post-translational delivery of tail-anchored (TA) proteins to the endoplasmic reticulum. Recognizes and selectively binds the transmembrane domain of TA proteins in the cytosol. This complex then targets to the endoplasmic reticulum by membrane-bound receptors, where the tail-anchored protein is released for insertion. This process is regulated by ATP binding and hydrolysis. ATP binding drives the homodimer towards the closed dimer state, facilitating recognition of newly synthesized TA membrane proteins. ATP hydrolysis is required for insertion. Subsequently, the homodimer reverts towards the open dimer state, lowering its affinity for the membrane-bound receptor, and returning it to the cytosol to initiate a new round of targeting. In Chaetomium globosum (strain ATCC 6205 / CBS 148.51 / DSM 1962 / NBRC 6347 / NRRL 1970) (Soil fungus), this protein is ATPase GET3.